We begin with the raw amino-acid sequence, 166 residues long: MMQEESSSPVSPVDSLSNSEEELDKQQSKRGCRKRRSARKSPEDPDSPISVKRNKKASSTGSSPQSFEELQSQRVMANVRERQRTQSLNEAFSSLRKIIPTLPSDKLSKIQTLKLASRYIDFLCQVLQSDELDSKMASCSYVAHERLSYAFSVWRMEGAWSMSASH.

Residues 1-18 (MMQEESSSPVSPVDSLSN) are compositionally biased toward low complexity. Positions 1-83 (MMQEESSSPV…RVMANVRERQ (83 aa)) are disordered. Residues 28–39 (SKRGCRKRRSAR) show a composition bias toward basic residues. Residues 57-75 (ASSTGSSPQSFEELQSQRV) show a composition bias toward polar residues. In terms of domain architecture, bHLH spans 72–123 (SQRVMANVRERQRTQSLNEAFSSLRKIIPTLPSDKLSKIQTLKLASRYIDFL).

Efficient DNA binding requires dimerization with another bHLH protein. Homodimer. In terms of tissue distribution, subset of mesodermal cells.

It is found in the nucleus. Functionally, probable transcription factor, which may be involved, with other proteins, in establishing the pattern of cell type-specific gene expression in mesodermal cell subgroups. The polypeptide is Twist-related protein (twist1) (Xenopus laevis (African clawed frog)).